Reading from the N-terminus, the 35-residue chain is Photosystem I reaction center subunit Z (35 aa).

A helical transmembrane segment spans residues 10 to 30 (LVIITTLVVPFMAAAALLFII).

The G.violaceus PSI reaction center is composed of one copy each of PsaA,B,C,D,E,F,L,M and Z, and forms trimeric complexes.

The protein localises to the cell inner membrane. The polypeptide is Photosystem I reaction center subunit Z (psaZ) (Gloeobacter violaceus (strain ATCC 29082 / PCC 7421)).